A 309-amino-acid chain; its full sequence is Ferrochelatase (309 aa).

The Fe cation site is built by His187 and Glu265.

It belongs to the ferrochelatase family.

Its subcellular location is the cytoplasm. It catalyses the reaction heme b + 2 H(+) = protoporphyrin IX + Fe(2+). It participates in porphyrin-containing compound metabolism; protoheme biosynthesis; protoheme from protoporphyrin-IX: step 1/1. Its function is as follows. Catalyzes the ferrous insertion into protoporphyrin IX. This is Ferrochelatase from Nitratiruptor sp. (strain SB155-2).